A 268-amino-acid polypeptide reads, in one-letter code: Zinc finger protein SNAI2 (268 aa).

Residues 1 to 20 (MPRSFLVKKHFNASKKPNYS) are SNAG domain. The tract at residues 84 to 116 (GRVSPLPSSDTSSKDHSGSESPISDEEERLQPK) is disordered. 4 C2H2-type zinc fingers span residues 128–150 (FQCNLCNKTYSTFSGLAKHKQLH), 159–181 (FSCKYCDKEYVSLGALKMHIRTH), 185–207 (CVCKICGKAFSRPWLLQGHIRTH), and 213–235 (FSCPHCNRAFADRSNLRAHLQTH). Residues 241 to 264 (YQCKNCSKTFSRMSLLHKHEESGC) form a C2H2-type 5; atypical zinc finger.

This sequence belongs to the snail C2H2-type zinc-finger protein family. Interacts (via SNAG domain) with LIMD1 (via LIM domains), WTIP (via LIM domains) and AJUBA (via LIM domains). Interacts (via zinc fingers) with KPNA2, KPNB1 and TNPO1. May interact (via zinc fingers) with IPO7. In terms of processing, phosphorylated by GSK3B. Once phosphorylated, it becomes a target for ubiquitination. Post-translationally, ubiquitinated by the SCF(FBXO11) complex; ubiquitination requires previous GSK3B-mediated SNAI2 phosphorylation.

Its subcellular location is the nucleus. The protein resides in the cytoplasm. In terms of biological role, transcriptional repressor that modulates both activator-dependent and basal transcription. Involved in the generation and migration of neural crest cells. Plays a role in mediating RAF1-induced transcriptional repression of the TJ protein, occludin (OCLN) and subsequent oncogenic transformation of epithelial cells. Represses BRCA2 expression by binding to its E2-box-containing silencer and recruiting CTBP1 and HDAC1 in breast cells. In epidermal keratinocytes, binds to the E-box in ITGA3 promoter and represses its transcription. Involved in the regulation of ITGB1 and ITGB4 expression and cell adhesion and proliferation in epidermal keratinocytes. Binds to E-box2 domain of BSG and activates its expression during TGFB1-induced epithelial-mesenchymal transition (EMT) in hepatocytes. Represses E-Cadherin/CDH1 transcription via E-box elements. Involved in osteoblast maturation. Binds to RUNX2 and SOC9 promoters and may act as a positive and negative transcription regulator, respectively, in osteoblasts. Binds to CXCL12 promoter via E-box regions in mesenchymal stem cells and osteoblasts. Plays an essential role in TWIST1-induced EMT and its ability to promote invasion and metastasis. The polypeptide is Zinc finger protein SNAI2 (Snai2) (Rattus norvegicus (Rat)).